Reading from the N-terminus, the 416-residue chain is Thyroid hormone receptor alpha-A (416 aa).

Residues M1 to S13 are compositionally biased toward polar residues. The segment at M1–S37 is disordered. A modulating region spans residues M1–P58. Residues G15–P24 are compositionally biased toward basic and acidic residues. 2 NR C4-type zinc fingers span residues C59–C79 and C97–C121. Positions C59–M126 form a DNA-binding region, nuclear receptor. The region spanning A169–D413 is the NR LBD domain.

It belongs to the nuclear hormone receptor family. NR1 subfamily.

It is found in the nucleus. Its function is as follows. High affinity receptor for triiodothyronine. In Paralichthys olivaceus (Bastard halibut), this protein is Thyroid hormone receptor alpha-A (thra1).